The following is a 422-amino-acid chain: UDP-N-acetylmuramoylalanine--D-glutamate ligase (422 aa).

G102–T108 provides a ligand contact to ATP.

This sequence belongs to the MurCDEF family.

It localises to the cytoplasm. It carries out the reaction UDP-N-acetyl-alpha-D-muramoyl-L-alanine + D-glutamate + ATP = UDP-N-acetyl-alpha-D-muramoyl-L-alanyl-D-glutamate + ADP + phosphate + H(+). Its pathway is cell wall biogenesis; peptidoglycan biosynthesis. Its function is as follows. Cell wall formation. Catalyzes the addition of glutamate to the nucleotide precursor UDP-N-acetylmuramoyl-L-alanine (UMA). The sequence is that of UDP-N-acetylmuramoylalanine--D-glutamate ligase from Helicobacter pylori (strain J99 / ATCC 700824) (Campylobacter pylori J99).